The chain runs to 395 residues: Trans-2-enoyl-CoA reductase [NADH] (395 aa).

NAD(+)-binding positions include 47-52 (GASTGY), 73-74 (FE), 110-111 (DA), and 138-139 (LA). Substrate is bound at residue Y224. The Proton donor role is filled by Y234. NAD(+) is bound by residues K243 and 272–274 (VVT).

This sequence belongs to the TER reductase family. As to quaternary structure, monomer.

It carries out the reaction a 2,3-saturated acyl-CoA + NAD(+) = a (2E)-enoyl-CoA + NADH + H(+). It functions in the pathway lipid metabolism; fatty acid biosynthesis. Involved in the fatty acid synthesis (FAS II). Catalyzes the reduction of a carbon-carbon double bond in an enoyl moiety that is covalently linked to a coenzyme A (CoA). The protein is Trans-2-enoyl-CoA reductase [NADH] of Ruminiclostridium cellulolyticum (strain ATCC 35319 / DSM 5812 / JCM 6584 / H10) (Clostridium cellulolyticum).